A 115-amino-acid polypeptide reads, in one-letter code: Large ribosomal subunit protein bL20 (115 aa).

The protein belongs to the bacterial ribosomal protein bL20 family.

Binds directly to 23S ribosomal RNA and is necessary for the in vitro assembly process of the 50S ribosomal subunit. It is not involved in the protein synthesizing functions of that subunit. The chain is Large ribosomal subunit protein bL20 from Chlorobium chlorochromatii (strain CaD3).